The sequence spans 589 residues: Ubiquilin-1 (589 aa).

The span at 1–11 shows a compositional bias: gly residues; sequence MAESGESGGPP. Disordered stretches follow at residues 1-35 and 110-145; these read MAESGESGGPPGSQDSAAGAEGAGAPAAAASAEPK and NRPQDHSAQQTNTAGSNVTTSSTPNSNSTSGSATSN. An N-acetylalanine modification is found at alanine 2. Residues 12–35 show a composition bias toward low complexity; it reads GSQDSAAGAEGAGAPAAAASAEPK. Positions 37 to 111 constitute a Ubiquitin-like domain; it reads MKVTVKTPKE…VHLVIKTQNR (75 aa). Polar residues predominate over residues 110-124; the sequence is NRPQDHSAQQTNTAG. Residues 125-145 show a composition bias toward low complexity; sequence SNVTTSSTPNSNSTSGSATSN. Positions 178–428 are interaction with UBXN4; sequence QLLSNPEMMV…LNNPLFAGNP (251 aa). 2 consecutive STI1 domains span residues 182–210 and 212–251; these read NPEMMVQIMENPFVQSMLSNPDLMRQLIM and NPQMQQLIQRNPEISHMLNNPDIMRQTLELARNPAMMQEM. The interval 295–371 is disordered; that stretch reads PFASLVSNTS…NLVPGVGASM (77 aa). Residues 299-313 show a composition bias toward polar residues; sequence LVSNTSSGEGSQPSR. Residues 327–360 show a composition bias toward low complexity; sequence QTSQSSSASSGTASTVGGTTGSTASGTSGQSTTA. 2 consecutive STI1 domains span residues 387–434 and 438–470; these read NPQL…QEQM and LPTFLQQMQNPDTLSAMSNPRAMQALLQIQQGL. The segment at 488-520 is disordered; it reads LGALGSTGGSSGTNGSNATPSENTSPTAGTTEP. Residues 489–499 show a composition bias toward gly residues; that stretch reads GALGSTGGSSG. Residues 509-520 are compositionally biased toward polar residues; the sequence is ENTSPTAGTTEP. Residues 546–586 form the UBA domain; the sequence is RFQQQLEQPSAMGFLNREANLQALIATGGDINAAIERLLGS.

Monomer and homodimer. Heterodimer with UBQLN2. Binds CD47, NBL1, GABRA1, GABRA2, GABRA3, GABRA6, GABRB1, GABRB2 and GABRB3. Binds UBE3A, BTRC, P4HB and MTOR. Interacts with the proteasome 19S subunit. Interacts (via ubiquitin-like domain) with TREX1; the interaction is direct and may control TREX1 subcellular location. Forms a complex with UBXN4 and VCP. Interacts (via UBA domain) with UBQLN4 (via ubiquitin-like domain). Found in a complex with UBQLN2 and MAP1LC3A/B/C. The monomeric form interacts with PSEN1 and PSEN2. Interacts with ORAI1. Interacts (via UBA domain) with TICAM1. Interacts with EPS15. Interacts (via UBA domain) with UBA52 and (via ubiquitin-like domain) with PSMD3 and PSMD4. Interacts with HERPUD1. Interacts with MAP1LC3A/B/C in the presence of UBQLN4. Interacts (via ubiquitin-like domain) with EPS15 (via UIM domains) and both the ubiquitinated and non-ubiquitinated forms can interact with EPS15. Interacts (via ubiquitin-like domain) with EPS15L1, HGS (via UIM domain) and STAM2 (via UIM domain). Interacts with BCL2L10/BCL-B; in the cytoplasm. Post-translationally, degraded during both macroautophagy and during chaperone-mediated autophagy (CMA). In terms of processing, phosphorylated. Ubiquitinated.

The protein resides in the nucleus. The protein localises to the cytoplasm. Its subcellular location is the endoplasmic reticulum. It is found in the cytoplasmic vesicle. It localises to the autophagosome. The protein resides in the cell membrane. Plays an important role in the regulation of different protein degradation mechanisms and pathways including ubiquitin-proteasome system (UPS), autophagy and endoplasmic reticulum-associated protein degradation (ERAD) pathway. Mediates the proteasomal targeting of misfolded or accumulated proteins for degradation by binding (via UBA domain) to their polyubiquitin chains and by interacting (via ubiquitin-like domain) with the subunits of the proteasome. Plays a role in the ERAD pathway via its interaction with ER-localized proteins UBXN4, VCP and HERPUD1 and may form a link between the polyubiquitinated ERAD substrates and the proteasome. Plays a role in unfolded protein response (UPR) by attenuating the induction of UPR-inducible genes, DDTI3/CHOP, HSPA5 and PDIA2 during ER stress. Involved in the regulation of macroautophagy and autophagosome formation; required for maturation of autophagy-related protein LC3 from the cytosolic form LC3-I to the membrane-bound form LC3-II and may assist in the maturation of autophagosomes to autolysosomes by mediating autophagosome-lysosome fusion. Negatively regulates the TICAM1/TRIF-dependent toll-like receptor signaling pathway by decreasing the abundance of TICAM1 via the autophagic pathway. Promotes the ubiquitination and lysosomal degradation of ORAI1, consequently down-regulating the ORAI1-mediated Ca2+ mobilization. Suppresses the maturation and proteasomal degradation of amyloid beta A4 protein (A4) by stimulating the lysine 63 (K63)-linked polyubiquitination. Delays the maturation of A4 by sequestering it in the Golgi apparatus and preventing its transport to the cell surface for subsequent processing. Ubiquitinates BCL2L10 and thereby stabilizes protein abundance. This chain is Ubiquilin-1 (UBQLN1), found in Pongo abelii (Sumatran orangutan).